The following is a 668-amino-acid chain: UvrABC system protein B (668 aa).

Residues 36–423 (DNIKGGEKAQ…TETVVEQIIR (388 aa)) enclose the Helicase ATP-binding domain. An ATP-binding site is contributed by 49 to 56 (GATGTGKT). The Beta-hairpin motif lies at 102–125 (YYDYYQPEAYVPSSDTYIEKDSSI). Positions 440 to 606 (QMDDLLGEIN…TIKKEIRDLI (167 aa)) constitute a Helicase C-terminal domain. The region spanning 632-667 (QEAIKKLQKQMHEAAELLDFELAAQIRDMVLELKSM) is the UVR domain.

This sequence belongs to the UvrB family. In terms of assembly, forms a heterotetramer with UvrA during the search for lesions. Interacts with UvrC in an incision complex.

Its subcellular location is the cytoplasm. In terms of biological role, the UvrABC repair system catalyzes the recognition and processing of DNA lesions. A damage recognition complex composed of 2 UvrA and 2 UvrB subunits scans DNA for abnormalities. Upon binding of the UvrA(2)B(2) complex to a putative damaged site, the DNA wraps around one UvrB monomer. DNA wrap is dependent on ATP binding by UvrB and probably causes local melting of the DNA helix, facilitating insertion of UvrB beta-hairpin between the DNA strands. Then UvrB probes one DNA strand for the presence of a lesion. If a lesion is found the UvrA subunits dissociate and the UvrB-DNA preincision complex is formed. This complex is subsequently bound by UvrC and the second UvrB is released. If no lesion is found, the DNA wraps around the other UvrB subunit that will check the other stand for damage. The sequence is that of UvrABC system protein B from Streptococcus thermophilus (strain CNRZ 1066).